Consider the following 75-residue polypeptide: Small ribosomal subunit protein bS18 (75 aa).

It belongs to the bacterial ribosomal protein bS18 family. In terms of assembly, part of the 30S ribosomal subunit. Forms a tight heterodimer with protein bS6.

Functionally, binds as a heterodimer with protein bS6 to the central domain of the 16S rRNA, where it helps stabilize the platform of the 30S subunit. This chain is Small ribosomal subunit protein bS18 (rbsR), found in Rhodobacter capsulatus (strain ATCC BAA-309 / NBRC 16581 / SB1003).